A 603-amino-acid chain; its full sequence is uncharacterized protein (603 aa).

The segment covering 496 to 513 has biased composition (acidic residues); that stretch reads EEEDQEEDDTSDDDDQEK. Disordered stretches follow at residues 496 to 536 and 549 to 568; these read EEED…GSLE and AVAEQDRKKTQKKHKIDTAQ. Polar residues predominate over residues 517 to 533; sequence NPQNNIGSLTRTPSSPG.

The protein belongs to the herpesviridae US22 family.

This is an uncharacterized protein from Human cytomegalovirus (strain AD169) (HHV-5).